The chain runs to 284 residues: MKTTMLMLVLLVCSYIHYVCAQIRFVTPATTDSMDFTAISFSWEESNTGIPLEDITNTVFYICSGSMDAPQPCAVLYTSPSPSSISQAGPFAISQVFGPAGRLYFLWAQSTYAGGIVNDYTDFFTVNGLTGTFDNYEIYASLMALGVYPYVPTLTGFSTFLGVWPTGTMRDWYLSQTTGVLRTGPIQNRPDSTFTAATTDIQPLWETSSYSVFTTFAGPPIATSTVFASPTYMYTLYANYASTASKPTIIATPTAGLRRRDSWAQAAPKRGMRLGEHKRGLLYS.

The first 21 residues, 1 to 21, serve as a signal peptide directing secretion; the sequence is MKTTMLMLVLLVCSYIHYVCA. 3 consecutive transmembrane segments (helical) span residues 88 to 108, 144 to 164, and 212 to 232; these read AGPF…FLWA, ALGV…LGVW, and VFTT…SPTY.

It is found in the membrane. This is an uncharacterized protein from Schizosaccharomyces pombe (strain 972 / ATCC 24843) (Fission yeast).